A 260-amino-acid polypeptide reads, in one-letter code: MAKDDSTVRCFQGLLIFGHVIVGMCGIALTAECIFFVSDQHSLYPLLEATNNDDIFGAAWIGMFVGICLFCLSVLAIVGIMKSNRKILLAYFIMMFIVYGFEVASCITAATQRDFFTTNLFLKQMLMRYQNNSPPTNDDKWKNSYVTKTWDRLMLQDHCCGVNGPSDWQKYTSAFRVENSDADYPWPRQCCVMDKLQEPLNLDACKLGVPGYYHSQGCYELISGPMDRHAWGVAWFGFAILCWTFWVLLGTMFYWSRIEY.

Topologically, residues 1 to 15 (MAKDDSTVRCFQGLL) are cytoplasmic. Residues 16 to 36 (IFGHVIVGMCGIALTAECIFF) form a helical membrane-spanning segment. The Extracellular portion of the chain corresponds to 37-59 (VSDQHSLYPLLEATNNDDIFGAA). A helical membrane pass occupies residues 60-80 (WIGMFVGICLFCLSVLAIVGI). The Cytoplasmic portion of the chain corresponds to 81 to 86 (MKSNRK). The chain crosses the membrane as a helical span at residues 87–107 (ILLAYFIMMFIVYGFEVASCI). Topologically, residues 108-229 (TAATQRDFFT…ELISGPMDRH (122 aa)) are extracellular. The helical transmembrane segment at 230 to 250 (AWGVAWFGFAILCWTFWVLLG) threads the bilayer. The Cytoplasmic segment spans residues 251–260 (TMFYWSRIEY).

It belongs to the tetraspanin (TM4SF) family. Heterodimer with uroplakin-3A (UPK3A) or uroplakin-3B (UPK3B). In terms of processing, N-glycosylated with high-mannose oligosaccharides.

The protein localises to the membrane. Component of the asymmetric unit membrane (AUM); a highly specialized biomembrane elaborated by terminally differentiated urothelial cells. May play an important role in normal bladder epithelial physiology, possibly in regulating membrane permeability of superficial umbrella cells or in stabilizing the apical membrane through AUM/cytoskeletal interactions. The sequence is that of Uroplakin-1b (Upk1b) from Rattus norvegicus (Rat).